A 255-amino-acid polypeptide reads, in one-letter code: tRNA pseudouridine synthase A (255 aa).

Asp-52 functions as the Nucleophile in the catalytic mechanism. Residue Tyr-111 coordinates substrate.

The protein belongs to the tRNA pseudouridine synthase TruA family. As to quaternary structure, homodimer.

The catalysed reaction is uridine(38/39/40) in tRNA = pseudouridine(38/39/40) in tRNA. Functionally, formation of pseudouridine at positions 38, 39 and 40 in the anticodon stem and loop of transfer RNAs. In Cereibacter sphaeroides (strain ATCC 17029 / ATH 2.4.9) (Rhodobacter sphaeroides), this protein is tRNA pseudouridine synthase A.